The primary structure comprises 522 residues: 2-isopropylmalate synthase (522 aa).

One can recognise a Pyruvate carboxyltransferase domain in the interval 5 to 267; the sequence is VIIFDTTLRD…ETGINAKEIH (263 aa). D14, H202, H204, and N238 together coordinate Mn(2+). The tract at residues 392-522 is regulatory domain; that stretch reads QLQQLVVQSD…MHKNRELGGV (131 aa).

This sequence belongs to the alpha-IPM synthase/homocitrate synthase family. LeuA type 1 subfamily. In terms of assembly, homodimer. Mn(2+) is required as a cofactor.

The protein localises to the cytoplasm. The catalysed reaction is 3-methyl-2-oxobutanoate + acetyl-CoA + H2O = (2S)-2-isopropylmalate + CoA + H(+). Its pathway is amino-acid biosynthesis; L-leucine biosynthesis; L-leucine from 3-methyl-2-oxobutanoate: step 1/4. Catalyzes the condensation of the acetyl group of acetyl-CoA with 3-methyl-2-oxobutanoate (2-ketoisovalerate) to form 3-carboxy-3-hydroxy-4-methylpentanoate (2-isopropylmalate). This is 2-isopropylmalate synthase from Shewanella sp. (strain MR-7).